A 367-amino-acid polypeptide reads, in one-letter code: tRNA/tmRNA (uracil-C(5))-methyltransferase (367 aa).

5 residues coordinate S-adenosyl-L-methionine: Q190, Y218, N223, E239, and D299. Residue C324 is the Nucleophile of the active site. The active-site Proton acceptor is E358.

Belongs to the class I-like SAM-binding methyltransferase superfamily. RNA M5U methyltransferase family. TrmA subfamily.

It carries out the reaction uridine(54) in tRNA + S-adenosyl-L-methionine = 5-methyluridine(54) in tRNA + S-adenosyl-L-homocysteine + H(+). The enzyme catalyses uridine(341) in tmRNA + S-adenosyl-L-methionine = 5-methyluridine(341) in tmRNA + S-adenosyl-L-homocysteine + H(+). Dual-specificity methyltransferase that catalyzes the formation of 5-methyluridine at position 54 (m5U54) in all tRNAs, and that of position 341 (m5U341) in tmRNA (transfer-mRNA). This chain is tRNA/tmRNA (uracil-C(5))-methyltransferase, found in Serratia proteamaculans (strain 568).